Consider the following 216-residue polypeptide: Peroxiredoxin (216 aa).

The region spanning 2 to 158 (IVIGEKFPEV…ILRLVKALKI (157 aa)) is the Thioredoxin domain. The active-site Cysteine sulfenic acid (-SOH) intermediate is the Cys-46. Arg-121 lines the substrate pocket. Cys-205 and Cys-211 form a disulfide bridge.

The protein belongs to the peroxiredoxin family. Prx6 subfamily. As to quaternary structure, homodecamer. Pentamer of dimers that assemble into a ring structure.

The protein localises to the cytoplasm. It catalyses the reaction a hydroperoxide + [thioredoxin]-dithiol = an alcohol + [thioredoxin]-disulfide + H2O. In terms of biological role, thiol-specific peroxidase that catalyzes the reduction of hydrogen peroxide and organic hydroperoxides to water and alcohols, respectively. Plays a role in cell protection against oxidative stress by detoxifying peroxides. This chain is Peroxiredoxin, found in Pyrococcus furiosus (strain ATCC 43587 / DSM 3638 / JCM 8422 / Vc1).